Here is a 361-residue protein sequence, read N- to C-terminus: Ribosomal RNA large subunit methyltransferase M (361 aa).

Residues Ser186, 219 to 222 (CPGG), Asp238, Asp258, and Asp275 contribute to the S-adenosyl-L-methionine site. The Proton acceptor role is filled by Lys304.

The protein belongs to the class I-like SAM-binding methyltransferase superfamily. RNA methyltransferase RlmE family. RlmM subfamily. Monomer.

It is found in the cytoplasm. The enzyme catalyses cytidine(2498) in 23S rRNA + S-adenosyl-L-methionine = 2'-O-methylcytidine(2498) in 23S rRNA + S-adenosyl-L-homocysteine + H(+). Catalyzes the 2'-O-methylation at nucleotide C2498 in 23S rRNA. The protein is Ribosomal RNA large subunit methyltransferase M of Pseudoalteromonas translucida (strain TAC 125).